The primary structure comprises 195 residues: Elongation factor P (195 aa).

Belongs to the elongation factor P family.

Its subcellular location is the cytoplasm. The protein operates within protein biosynthesis; polypeptide chain elongation. Involved in peptide bond synthesis. Stimulates efficient translation and peptide-bond synthesis on native or reconstituted 70S ribosomes in vitro. Probably functions indirectly by altering the affinity of the ribosome for aminoacyl-tRNA, thus increasing their reactivity as acceptors for peptidyl transferase. The sequence is that of Elongation factor P from Rhodopirellula baltica (strain DSM 10527 / NCIMB 13988 / SH1).